Here is a 95-residue protein sequence, read N- to C-terminus: Aspartyl/glutamyl-tRNA(Asn/Gln) amidotransferase subunit C (95 aa).

It belongs to the GatC family. In terms of assembly, heterotrimer of A, B and C subunits.

It carries out the reaction L-glutamyl-tRNA(Gln) + L-glutamine + ATP + H2O = L-glutaminyl-tRNA(Gln) + L-glutamate + ADP + phosphate + H(+). It catalyses the reaction L-aspartyl-tRNA(Asn) + L-glutamine + ATP + H2O = L-asparaginyl-tRNA(Asn) + L-glutamate + ADP + phosphate + 2 H(+). Its function is as follows. Allows the formation of correctly charged Asn-tRNA(Asn) or Gln-tRNA(Gln) through the transamidation of misacylated Asp-tRNA(Asn) or Glu-tRNA(Gln) in organisms which lack either or both of asparaginyl-tRNA or glutaminyl-tRNA synthetases. The reaction takes place in the presence of glutamine and ATP through an activated phospho-Asp-tRNA(Asn) or phospho-Glu-tRNA(Gln). This Nitrobacter hamburgensis (strain DSM 10229 / NCIMB 13809 / X14) protein is Aspartyl/glutamyl-tRNA(Asn/Gln) amidotransferase subunit C.